A 526-amino-acid polypeptide reads, in one-letter code: Peptide chain release factor 3 (526 aa).

Residues 8–277 form the tr-type G domain; that stretch reads DKRRTFAIIS…GLTQWAPKPQ (270 aa). Residues 17-24, 85-89, and 139-142 each bind GTP; these read SHPDAGKT, DTPGH, and NKLD.

This sequence belongs to the TRAFAC class translation factor GTPase superfamily. Classic translation factor GTPase family. PrfC subfamily.

The protein localises to the cytoplasm. Increases the formation of ribosomal termination complexes and stimulates activities of RF-1 and RF-2. It binds guanine nucleotides and has strong preference for UGA stop codons. It may interact directly with the ribosome. The stimulation of RF-1 and RF-2 is significantly reduced by GTP and GDP, but not by GMP. This Actinobacillus succinogenes (strain ATCC 55618 / DSM 22257 / CCUG 43843 / 130Z) protein is Peptide chain release factor 3.